A 345-amino-acid polypeptide reads, in one-letter code: Prenyltransferase ltmC (345 aa).

Residue His-112 participates in substrate binding. The Mg(2+) site is built by Asp-119 and Asp-123. Arg-128 provides a ligand contact to substrate. Residue Asn-130 is glycosylated (N-linked (GlcNAc...) asparagine). Substrate-binding residues include Lys-212, Thr-213, Gln-243, Asn-250, and Lys-260.

It belongs to the FPP/GGPP synthase family. Mg(2+) is required as a cofactor.

It functions in the pathway secondary metabolite biosynthesis. Prenyltransferase; part of the gene cluster that mediates the biosynthesis of lolitrems, indole-diterpene mycotoxins that are potent tremorgens in mammals, and are synthesized by clavicipitaceous fungal endophytes in association with their grass hosts. The geranylgeranyl diphosphate (GGPP) synthase ltmG is proposed to catalyze the first step in lolitrem biosynthesis. LtmG catalyzes a series of iterative condensations of isopentenyl diphosphate (IPP) with dimethylallyl diphosphate (DMAPP), geranyl diphosphate (GPP), and farnesyl diphosphate (FPP), to form GGPP. GGPP then condenses with indole-3-glycerol phosphate to form 3-geranylgeranylindole, an acyclic intermediate, to be incorporated into paxilline. Either ltmG or ltmC could be responsible for this step, as both are putative prenyl transferases. The FAD-dependent monooxygenase ltmM then catalyzes the epoxidation of the two terminal alkenes of the geranylgeranyl moiety, which is subsequently cyclized by ltmB, to paspaline. The cytochrome P450 monooxygenases ltmQ and ltmP can sequentially oxidize paspaline to terpendole E and terpendole F. Alternatively, ltmP converts paspaline to an intermediate which is oxidized by ltmQ to terpendole F. LtmF, ltmK, ltmE and ltmJ appear to be unique to the epichloe endophytes. The prenyltransferase ltmF is involved in the 27-hydroxyl-O-prenylation. The cytochrome P450 monooxygenase ltmK is required for the oxidative acetal ring formation. The multi-functional prenyltransferase ltmE is required for C20- and C21-prenylations of the indole ring of paspalanes and acts together with the cytochrome P450 monooxygenase ltmJ to yield lolitremanes by multiple oxidations and ring closures. The stereoisomer pairs of lolitriol and lolitrem N or lolitrem B and lolitrem F may be attributed to variations in the way in which ring closure can occur under the action of ltmJ. While the major product of this pathway is lolitrem B, the prenyl transferases and cytochrome P450 monooxygenases identified in this pathway have a remarkable versatility in their regio- and stereo-specificities to generate a diverse range of metabolites that are products of a metabolic grid rather than a linear pathway. In Epichloe festucae var. lolii (Neotyphodium lolii), this protein is Prenyltransferase ltmC.